The chain runs to 298 residues: Nucleotide-binding protein RSKD131_3085 (298 aa).

Position 11–18 (11–18 (GPSGAGRT)) interacts with ATP. 58–61 (DVRN) provides a ligand contact to GTP.

The protein belongs to the RapZ-like family.

Functionally, displays ATPase and GTPase activities. The protein is Nucleotide-binding protein RSKD131_3085 of Cereibacter sphaeroides (strain KD131 / KCTC 12085) (Rhodobacter sphaeroides).